Reading from the N-terminus, the 465-residue chain is Phosphomethylpyrimidine synthase (465 aa).

Residues Asn-80, Met-109, Tyr-139, His-175, 195–197, 236–239, and Glu-275 contribute to the substrate site; these read SRG and DSLR. His-279 is a binding site for Zn(2+). Residue Tyr-302 coordinates substrate. His-343 contributes to the Zn(2+) binding site. 3 residues coordinate [4Fe-4S] cluster: Cys-423, Cys-426, and Cys-431.

It belongs to the ThiC family. It depends on [4Fe-4S] cluster as a cofactor.

It carries out the reaction 5-amino-1-(5-phospho-beta-D-ribosyl)imidazole + S-adenosyl-L-methionine = 4-amino-2-methyl-5-(phosphooxymethyl)pyrimidine + CO + 5'-deoxyadenosine + formate + L-methionine + 3 H(+). The protein operates within cofactor biosynthesis; thiamine diphosphate biosynthesis. Functionally, catalyzes the synthesis of the hydroxymethylpyrimidine phosphate (HMP-P) moiety of thiamine from aminoimidazole ribotide (AIR) in a radical S-adenosyl-L-methionine (SAM)-dependent reaction. The protein is Phosphomethylpyrimidine synthase of Synechococcus sp. (strain CC9311).